Here is a 697-residue protein sequence, read N- to C-terminus: Transmembrane protein 168 (697 aa).

Transmembrane regions (helical) follow at residues 36 to 56, 63 to 83, and 89 to 109; these read LGYLARINLLVAICLGLYVRW, LILVIFILGLFVLGIASILYY, and AASLSLSNLWFGFLLGLLCFL. Asn-111 carries an N-linked (GlcNAc...) asparagine glycan. The next 7 helical transmembrane spans lie at 172 to 192, 199 to 219, 223 to 243, 265 to 285, 293 to 313, 352 to 372, and 380 to 400; these read MLVEKSLSVILLVVALAMLII, FLAIPNLVIFAVLLFFSSLET, PIAFACFFICLITDPFLDIYF, LSVVFAGMIELTFFILSAFKL, FVIPGFSIFGIFWMICHIIFL, FCLISEQLVFFSLLATAILGA, and GIFLSMFLIVLPLESMAHGLF. Residues Asn-533 and Asn-598 are each glycosylated (N-linked (GlcNAc...) asparagine). A helical membrane pass occupies residues 646–666; the sequence is ITYPLVHLANWLCGLNLFWIC.

This sequence belongs to the TMEM168 family.

Its subcellular location is the nucleus membrane. In terms of biological role, plays a key role in maintaining the cardiac electrical stability by modulating cell surface expression of SCN5A. May play a role in the modulation of anxiety behavior by regulating GABAergic neuronal system in the nucleus accumbens. The polypeptide is Transmembrane protein 168 (Homo sapiens (Human)).